The primary structure comprises 214 residues: Thiamine-phosphate synthase (214 aa).

Residues 37 to 41 (QYREK) and asparagine 73 each bind 4-amino-2-methyl-5-(diphosphooxymethyl)pyrimidine. Aspartate 74 and aspartate 93 together coordinate Mg(2+). Serine 112 is a 4-amino-2-methyl-5-(diphosphooxymethyl)pyrimidine binding site. 139-141 (TIS) provides a ligand contact to 2-[(2R,5Z)-2-carboxy-4-methylthiazol-5(2H)-ylidene]ethyl phosphate. Lysine 142 serves as a coordination point for 4-amino-2-methyl-5-(diphosphooxymethyl)pyrimidine. Residues glycine 171 and 191-192 (IS) contribute to the 2-[(2R,5Z)-2-carboxy-4-methylthiazol-5(2H)-ylidene]ethyl phosphate site.

The protein belongs to the thiamine-phosphate synthase family. It depends on Mg(2+) as a cofactor.

It catalyses the reaction 2-[(2R,5Z)-2-carboxy-4-methylthiazol-5(2H)-ylidene]ethyl phosphate + 4-amino-2-methyl-5-(diphosphooxymethyl)pyrimidine + 2 H(+) = thiamine phosphate + CO2 + diphosphate. The enzyme catalyses 2-(2-carboxy-4-methylthiazol-5-yl)ethyl phosphate + 4-amino-2-methyl-5-(diphosphooxymethyl)pyrimidine + 2 H(+) = thiamine phosphate + CO2 + diphosphate. It carries out the reaction 4-methyl-5-(2-phosphooxyethyl)-thiazole + 4-amino-2-methyl-5-(diphosphooxymethyl)pyrimidine + H(+) = thiamine phosphate + diphosphate. It functions in the pathway cofactor biosynthesis; thiamine diphosphate biosynthesis; thiamine phosphate from 4-amino-2-methyl-5-diphosphomethylpyrimidine and 4-methyl-5-(2-phosphoethyl)-thiazole: step 1/1. Functionally, condenses 4-methyl-5-(beta-hydroxyethyl)thiazole monophosphate (THZ-P) and 2-methyl-4-amino-5-hydroxymethyl pyrimidine pyrophosphate (HMP-PP) to form thiamine monophosphate (TMP). This Listeria monocytogenes serotype 4b (strain CLIP80459) protein is Thiamine-phosphate synthase.